An 88-amino-acid polypeptide reads, in one-letter code: uncharacterized protein (88 aa).

2 helical membrane passes run 8–28 (IFLS…SIFF) and 45–65 (ELLR…VINL).

It is found in the membrane. This is an uncharacterized protein from Saccharomyces cerevisiae (strain ATCC 204508 / S288c) (Baker's yeast).